Reading from the N-terminus, the 336-residue chain is MSFFGFGQSVEVEILLNDAESRKRAEHKTEDGKKEKYFLFYDGETVSGKVSLALKNPNKRLEHQGIKIEFIGQIELYYDRGNHHEFVSLVKDLARPGEITQSQAFDFEFTHVEKPYESYTGQNVKLRYFLRATISRRLNDVVKEMDIVVHTLSTYPELNSSIKMEVGIEDCLHIEFEYNKSKYHLKDVIVGKIYFLLVRIKIKHMEIDIIKRETTGTGPNVYHENDTIAKYEIMDGAPVRGESIPIRLFLAGYELTPTMRDINKKFSVRYYLNLVLIDEEERRYFKQQEVVLWRKGDIVRKSMSHQAAIASQRFEGTTSLGEVRTPSQLSDNNCRQ.

3 positions are modified to phosphoserine: Ser-302, Ser-304, and Ser-319.

Belongs to the VPS26 family. Component of the heterotrimeric retromer cargo-selective complex (CSC), also described as vacuolar protein sorting VPS subcomplex (VPS,) formed by VPS26 (VPS26A or VPS26B), VPS29 and VPS35. The CSC has a highly elongated structure with VPS26 and VPS29 binding independently at opposite distal ends of VPS35 as central platform. The CSC is believed to associate with variable sorting nexins to form functionally distinct retromer complex variants. The originally described retromer complex (also called SNX-BAR retromer) is a pentamer containing the CSC and a heterodimeric membrane-deforming subcomplex formed between SNX1 or SNX2 and SNX5 or SNX6 (also called SNX-BAR subcomplex); the respective CSC and SNX-BAR subcomplexes associate with low affinity. The CSC associates with SNX3 to form a SNX3-retromer complex. The CSC associates with SNX27, the WASH complex and the SNX-BAR subcomplex to form the SNX27-retromer complex. Interacts with VPS29, VPS35, TBC1D5, GOLPH3, SNX27.

It localises to the cytoplasm. The protein localises to the membrane. Its subcellular location is the early endosome. The protein resides in the late endosome. Functionally, acts as a component of the retromer cargo-selective complex (CSC). The CSC is believed to be the core functional component of retromer or respective retromer complex variants acting to prevent missorting of selected transmembrane cargo proteins into the lysosomal degradation pathway. The recruitment of the CSC to the endosomal membrane involves RAB7A and SNX3. The SNX-BAR retromer mediates retrograde transport of cargo proteins from endosomes to the trans-Golgi network (TGN) and is involved in endosome-to-plasma membrane transport for cargo protein recycling. The SNX3-retromer mediates the retrograde transport of WLS distinct from the SNX-BAR retromer pathway. The SNX27-retromer is believed to be involved in endosome-to-plasma membrane trafficking and recycling of a broad spectrum of cargo proteins. The CSC seems to act as recruitment hub for other proteins, such as the WASH complex and TBC1D5. May be involved in retrograde transport of SORT1 but not of IGF2R. Acts redundantly with VSP26A in SNX-27 mediated endocytic recycling of SLC2A1/GLUT1. The polypeptide is Vacuolar protein sorting-associated protein 26B (VPS26B) (Homo sapiens (Human)).